We begin with the raw amino-acid sequence, 166 residues long: Large ribosomal subunit protein uL10 (166 aa).

This sequence belongs to the universal ribosomal protein uL10 family. As to quaternary structure, part of the ribosomal stalk of the 50S ribosomal subunit. The N-terminus interacts with L11 and the large rRNA to form the base of the stalk. The C-terminus forms an elongated spine to which L12 dimers bind in a sequential fashion forming a multimeric L10(L12)X complex.

Forms part of the ribosomal stalk, playing a central role in the interaction of the ribosome with GTP-bound translation factors. The chain is Large ribosomal subunit protein uL10 from Shewanella woodyi (strain ATCC 51908 / MS32).